A 269-amino-acid polypeptide reads, in one-letter code: MTILFLTMVISYFSCMRAAPLRDAPGMRGHWTEGYLGAAATAPRGHGTPQSGGGPGQREELPSLTDTFEQVIEELLEVEGEAAHVGQGADKSQGGGGPSPVATAEANDVDLYNSRVMISNQVPLEPPLLFLLEEYKNYLDAANMSMRVRRHSDPSRRGELSVCDSISQWVTAVDKKTAIDMSGQTVTVMEKVPVPNGQLKQYFYETKCNPMGYTKDGCRGIDKRHYTSQCRTTQSYVRALTMDSKKKIGWRFIRIDTSCVCTLTIKRGR.

Positions 1–18 are cleaved as a signal peptide; the sequence is MTILFLTMVISYFSCMRA. Residues 19 to 150 constitute a propeptide that is removed on maturation; sequence APLRDAPGMR…AANMSMRVRR (132 aa). Disordered stretches follow at residues 39–61 and 82–104; these read AATA…REEL and AAHV…VATA. A glycan (N-linked (GlcNAc...) asparagine) is linked at Asn143. 3 cysteine pairs are disulfide-bonded: Cys163–Cys230, Cys208–Cys259, and Cys218–Cys261.

It belongs to the NGF-beta family.

Its function is as follows. BDNF promotes the survival of neuronal populations that are all located either in the central nervous system or directly connected to it. This chain is Neurotrophic factor BDNF precursor form (bdnf), found in Xiphophorus maculatus (Southern platyfish).